The sequence spans 251 residues: ATP synthase subunit a (251 aa).

5 helical membrane passes run 34-54 (VFLT…AASS), 93-113 (FVGT…LVPF), 130-150 (INTT…AGFS), 195-215 (LVVG…VMAL), and 216-236 (GLFT…AYIG).

This sequence belongs to the ATPase A chain family. In terms of assembly, F-type ATPases have 2 components, CF(1) - the catalytic core - and CF(0) - the membrane proton channel. CF(1) has five subunits: alpha(3), beta(3), gamma(1), delta(1), epsilon(1). CF(0) has four main subunits: a, b, b' and c.

The protein resides in the cellular thylakoid membrane. In terms of biological role, key component of the proton channel; it plays a direct role in the translocation of protons across the membrane. This Trichormus variabilis (strain ATCC 29413 / PCC 7937) (Anabaena variabilis) protein is ATP synthase subunit a.